The primary structure comprises 421 residues: Gamma-glutamyl phosphate reductase (421 aa).

It belongs to the gamma-glutamyl phosphate reductase family.

The protein localises to the cytoplasm. It catalyses the reaction L-glutamate 5-semialdehyde + phosphate + NADP(+) = L-glutamyl 5-phosphate + NADPH + H(+). It participates in amino-acid biosynthesis; L-proline biosynthesis; L-glutamate 5-semialdehyde from L-glutamate: step 2/2. Functionally, catalyzes the NADPH-dependent reduction of L-glutamate 5-phosphate into L-glutamate 5-semialdehyde and phosphate. The product spontaneously undergoes cyclization to form 1-pyrroline-5-carboxylate. The polypeptide is Gamma-glutamyl phosphate reductase (Pseudomonas fluorescens (strain ATCC BAA-477 / NRRL B-23932 / Pf-5)).